A 971-amino-acid chain; its full sequence is Outer capsid protein VP2 (971 aa).

The protein belongs to the orbivirus VP2 family.

It is found in the virion. Functionally, the VP2 protein is one of the two proteins (with VP5) which constitute the virus particle outer capsid. It is the major target of the host immunogenic response. This Epizootic hemorrhagic disease virus 1 (EHDV-1) protein is Outer capsid protein VP2 (Segment-2).